The primary structure comprises 298 residues: Epimerase family protein SSP1921 (298 aa).

Belongs to the NAD(P)-dependent epimerase/dehydratase family. SDR39U1 subfamily.

The polypeptide is Epimerase family protein SSP1921 (Staphylococcus saprophyticus subsp. saprophyticus (strain ATCC 15305 / DSM 20229 / NCIMB 8711 / NCTC 7292 / S-41)).